Consider the following 844-residue polypeptide: Protein translocase subunit SecA 1 (844 aa).

Residues Gln-91, Gly-109–Thr-113, and Asp-498 each bind ATP. The segment covering Lys-793 to Lys-813 has biased composition (basic and acidic residues). A disordered region spans residues Lys-793–Arg-825. Zn(2+)-binding residues include Cys-829, Cys-831, Cys-840, and His-841.

It belongs to the SecA family. Monomer and homodimer. Part of the essential Sec protein translocation apparatus which comprises SecA, SecYEG and auxiliary proteins SecDF. Other proteins may also be involved. Zn(2+) serves as cofactor.

It localises to the cell membrane. It is found in the cytoplasm. The catalysed reaction is ATP + H2O + cellular proteinSide 1 = ADP + phosphate + cellular proteinSide 2.. In terms of biological role, part of the Sec protein translocase complex. Interacts with the SecYEG preprotein conducting channel. Has a central role in coupling the hydrolysis of ATP to the transfer of proteins into and across the cell membrane, serving as an ATP-driven molecular motor driving the stepwise translocation of polypeptide chains across the membrane. The chain is Protein translocase subunit SecA 1 from Staphylococcus epidermidis (strain ATCC 35984 / DSM 28319 / BCRC 17069 / CCUG 31568 / BM 3577 / RP62A).